The primary structure comprises 203 residues: Large ribosomal subunit protein uL13 (203 aa).

Ala-2 carries the N-acetylalanine modification. The residue at position 59 (Arg-59) is a Citrulline. Position 77 is a phosphoserine (Ser-77). A Citrulline modification is found at Arg-140. Lys-191 is subject to N6-acetyllysine.

It belongs to the universal ribosomal protein uL13 family. Component of the 60S ribosome. Component of the GAIT complex. Interacts with EIF4G1. Post-translationally, phosphorylation at Ser-77 upon interferon-gamma treatment in monocytes involves a DAPK1-DAPK3 kinase cascade and is causing release from the ribosome, association with the GAIT complex and subsequent involvement in transcript-selective translation inhibition. In terms of processing, citrullinated by PADI4.

The protein resides in the cytoplasm. Its function is as follows. Associated with ribosomes but is not required for canonical ribosome function and has extra-ribosomal functions. Component of the GAIT (gamma interferon-activated inhibitor of translation) complex which mediates interferon-gamma-induced transcript-selective translation inhibition in inflammation processes. Upon interferon-gamma activation and subsequent phosphorylation dissociates from the ribosome and assembles into the GAIT complex which binds to stem loop-containing GAIT elements in the 3'-UTR of diverse inflammatory mRNAs (such as ceruplasmin) and suppresses their translation. In the GAIT complex interacts with m7G cap-bound eIF4G at or near the eIF3-binding site and blocks the recruitment of the 43S ribosomal complex. Involved in methylation of rRNA. The protein is Large ribosomal subunit protein uL13 (RPL13A) of Oryctolagus cuniculus (Rabbit).